The primary structure comprises 430 residues: UPF0597 protein CV_1824 (430 aa).

It belongs to the UPF0597 family.

The polypeptide is UPF0597 protein CV_1824 (Chromobacterium violaceum (strain ATCC 12472 / DSM 30191 / JCM 1249 / CCUG 213 / NBRC 12614 / NCIMB 9131 / NCTC 9757 / MK)).